The primary structure comprises 440 residues: Tyrosine--tRNA ligase (440 aa).

An L-tyrosine-binding site is contributed by tyrosine 46. Residues 51–60 (PTAASLHIGN) carry the 'HIGH' region motif. Tyrosine 181 and glutamine 185 together coordinate L-tyrosine. The 'KMSKS' region motif lies at 241-245 (KFGKS). Lysine 244 is a binding site for ATP. The 67-residue stretch at 373-439 (DRVIDAAQAA…GKKALGAVEN (67 aa)) folds into the S4 RNA-binding domain.

It belongs to the class-I aminoacyl-tRNA synthetase family. TyrS type 1 subfamily. As to quaternary structure, homodimer.

Its subcellular location is the cytoplasm. It carries out the reaction tRNA(Tyr) + L-tyrosine + ATP = L-tyrosyl-tRNA(Tyr) + AMP + diphosphate + H(+). Functionally, catalyzes the attachment of tyrosine to tRNA(Tyr) in a two-step reaction: tyrosine is first activated by ATP to form Tyr-AMP and then transferred to the acceptor end of tRNA(Tyr). The chain is Tyrosine--tRNA ligase from Bifidobacterium longum (strain NCC 2705).